We begin with the raw amino-acid sequence, 166 residues long: Interferon gamma (166 aa).

Residues 1–23 (MNYTSFILAFQLCAILGSSTYYC) form the signal peptide. Gln-24 bears the Pyrrolidone carboxylic acid mark. 2 N-linked (GlcNAc...) asparagine glycosylation sites follow: Asn-39 and Asn-106. Residues 147 to 166 (ANLRKRKRSQNPFRGRRALQ) form a disordered region. The segment covering 148–166 (NLRKRKRSQNPFRGRRALQ) has biased composition (basic residues).

Belongs to the type II (or gamma) interferon family. Homodimer. Interacts with IFNGR1 (via extracellular domain); this interaction promotes IFNGR1 dimerization. Released primarily from activated T lymphocytes.

The protein localises to the secreted. Type II interferon produced by immune cells such as T-cells and NK cells that plays crucial roles in antimicrobial, antiviral, and antitumor responses by activating effector immune cells and enhancing antigen presentation. Primarily signals through the JAK-STAT pathway after interaction with its receptor IFNGR1 to affect gene regulation. Upon IFNG binding, IFNGR1 intracellular domain opens out to allow association of downstream signaling components JAK2, JAK1 and STAT1, leading to STAT1 activation, nuclear translocation and transcription of IFNG-regulated genes. Many of the induced genes are transcription factors such as IRF1 that are able to further drive regulation of a next wave of transcription. Plays a role in class I antigen presentation pathway by inducing a replacement of catalytic proteasome subunits with immunoproteasome subunits. In turn, increases the quantity, quality, and repertoire of peptides for class I MHC loading. Increases the efficiency of peptide generation also by inducing the expression of activator PA28 that associates with the proteasome and alters its proteolytic cleavage preference. Up-regulates as well MHC II complexes on the cell surface by promoting expression of several key molecules such as cathepsins B/CTSB, H/CTSH, and L/CTSL. Participates in the regulation of hematopoietic stem cells during development and under homeostatic conditions by affecting their development, quiescence, and differentiation. The protein is Interferon gamma (IFNG) of Equus caballus (Horse).